Reading from the N-terminus, the 205-residue chain is Outer-membrane lipoprotein LolB (205 aa).

A signal peptide spans 1–17 (MFLRHCITFTLIALLAG). The N-palmitoyl cysteine moiety is linked to residue Cys-18. Residue Cys-18 is the site of S-diacylglycerol cysteine attachment.

Belongs to the LolB family. In terms of assembly, monomer.

The protein resides in the cell outer membrane. In terms of biological role, plays a critical role in the incorporation of lipoproteins in the outer membrane after they are released by the LolA protein. In Pseudomonas putida (strain W619), this protein is Outer-membrane lipoprotein LolB.